The sequence spans 262 residues: MKPKIKVENLTKYFGDKKVLDEISFEVYEGEIFGLLGHNGAGKTTTLRILAGIIEEYTGYVEVNGKIGYLPEERGLYRDEKVVDVLKFFGELAGMKKEEIAKSIDYWLNKLKISNYKYSKIKELSKGNQQKVQFIVSVIHNPDIVILDEPFSGLDVVNVRLLRDIIFELKEEGKTIILSTHQLEKIERLCDRVLILKKGKAVHYGKIEDICRKMAYIEYLDNGKLIKKEIPYEEAVLILKEKAEDVIKFEVRYSLEDLFLDE.

Residues 5-223 (IKVENLTKYF…MAYIEYLDNG (219 aa)) enclose the ABC transporter domain. 37–44 (GHNGAGKT) lines the ATP pocket.

This sequence belongs to the ABC transporter superfamily.

This is an uncharacterized protein from Methanocaldococcus jannaschii (strain ATCC 43067 / DSM 2661 / JAL-1 / JCM 10045 / NBRC 100440) (Methanococcus jannaschii).